The chain runs to 343 residues: S-adenosylmethionine:tRNA ribosyltransferase-isomerase (343 aa).

The protein belongs to the QueA family. As to quaternary structure, monomer.

The protein resides in the cytoplasm. The catalysed reaction is 7-aminomethyl-7-carbaguanosine(34) in tRNA + S-adenosyl-L-methionine = epoxyqueuosine(34) in tRNA + adenine + L-methionine + 2 H(+). Its pathway is tRNA modification; tRNA-queuosine biosynthesis. Functionally, transfers and isomerizes the ribose moiety from AdoMet to the 7-aminomethyl group of 7-deazaguanine (preQ1-tRNA) to give epoxyqueuosine (oQ-tRNA). The sequence is that of S-adenosylmethionine:tRNA ribosyltransferase-isomerase from Dehalococcoides mccartyi (strain ATCC BAA-2100 / JCM 16839 / KCTC 5957 / BAV1).